Here is a 252-residue protein sequence, read N- to C-terminus: MILHAQAKHGKPGLPWLVFLHGFSGDCHEWQEVGEAFADYSRLYVDLPGHGGSAAISVDGFDDVTDLLRKTLVSYNILEFWLVGYSLGGRVAMMAACQGLAGLCGVIVEGGHPGLQNAEQRAERQRSDRQWAQRFCTEPLTAVFADWYQQPVFASLNDDQRRELVALRSNNNGATLAAMLEATSLAVQPDLRANLSARTFAFYYLCGERDSKFRALAAELAADCHVIPRAGHNAHRENPAGVIASLAQILRF.

The protein belongs to the AB hydrolase superfamily. MenH family. As to quaternary structure, monomer.

It catalyses the reaction 5-enolpyruvoyl-6-hydroxy-2-succinyl-cyclohex-3-ene-1-carboxylate = (1R,6R)-6-hydroxy-2-succinyl-cyclohexa-2,4-diene-1-carboxylate + pyruvate. The protein operates within quinol/quinone metabolism; 1,4-dihydroxy-2-naphthoate biosynthesis; 1,4-dihydroxy-2-naphthoate from chorismate: step 3/7. It participates in quinol/quinone metabolism; menaquinone biosynthesis. Its function is as follows. Catalyzes a proton abstraction reaction that results in 2,5-elimination of pyruvate from 2-succinyl-5-enolpyruvyl-6-hydroxy-3-cyclohexene-1-carboxylate (SEPHCHC) and the formation of 2-succinyl-6-hydroxy-2,4-cyclohexadiene-1-carboxylate (SHCHC). The polypeptide is 2-succinyl-6-hydroxy-2,4-cyclohexadiene-1-carboxylate synthase (Escherichia coli O8 (strain IAI1)).